Here is a 321-residue protein sequence, read N- to C-terminus: uncharacterized protein (321 aa).

It belongs to the NAD(P)-dependent epimerase/dehydratase family.

This is an uncharacterized protein from Staphylococcus aureus (strain COL).